Consider the following 457-residue polypeptide: Serine--tRNA ligase (457 aa).

An L-serine-binding site is contributed by 252 to 254 (TAE). Residues 283–285 (RKE) and Val-299 contribute to the ATP site. Position 306 (Glu-306) interacts with L-serine. An ATP-binding site is contributed by 370 to 373 (EVVS). Thr-406 is an L-serine binding site.

It belongs to the class-II aminoacyl-tRNA synthetase family. Type-1 seryl-tRNA synthetase subfamily. As to quaternary structure, homodimer. The tRNA molecule binds across the dimer.

Its subcellular location is the cytoplasm. The enzyme catalyses tRNA(Ser) + L-serine + ATP = L-seryl-tRNA(Ser) + AMP + diphosphate + H(+). It catalyses the reaction tRNA(Sec) + L-serine + ATP = L-seryl-tRNA(Sec) + AMP + diphosphate + H(+). The protein operates within aminoacyl-tRNA biosynthesis; selenocysteinyl-tRNA(Sec) biosynthesis; L-seryl-tRNA(Sec) from L-serine and tRNA(Sec): step 1/1. Its function is as follows. Catalyzes the attachment of serine to tRNA(Ser). Is also able to aminoacylate tRNA(Sec) with serine, to form the misacylated tRNA L-seryl-tRNA(Sec), which will be further converted into selenocysteinyl-tRNA(Sec). The chain is Serine--tRNA ligase from Thermococcus onnurineus (strain NA1).